Here is a 291-residue protein sequence, read N- to C-terminus: E3 ubiquitin-protein ligase RZFP34 (291 aa).

The segment at 20–96 (IGSGHYGCSH…VQQNCSNCGV (77 aa)) adopts a CHY-type zinc-finger fold. The Zn(2+) site is built by Cys-27, His-29, Cys-40, Cys-41, Cys-47, Cys-50, His-51, His-66, Cys-78, Cys-81, Cys-91, Cys-94, Cys-103, Cys-106, His-119, Cys-120, Cys-123, Cys-126, His-136, Cys-137, Cys-140, Cys-143, His-152, and Cys-154. A CTCHY-type zinc finger spans residues 98–162 (MGKYFCSKCK…QCVEGAMHHN (65 aa)). Residues 163 to 206 (CPVCFEYLFDSTRDITVLRCGHTMHLECTKDMGLHNRYTCPVCS) form an RING-type; atypical zinc finger. At Ser-173 the chain carries Phosphoserine. Thr-178 is modified (phosphothreonine). Ser-208 is modified (phosphoserine). The segment at 271 to 291 (QRGSDSHSCSSGMPQVVGSTG) is disordered.

Interacts with SRK2D/2SNRK2.2, SRK2I/SNRK2.3 and SRK2E/SNRK2.6. Phosphorylated at Ser-173, Thr-178 and Ser-208 by SRK2E/SNRK2.6 in response to abscisic acid (ABA). Phosphorylation activates its E3 ubiquitin-protein ligase activity. In terms of tissue distribution, expressed in roots, leaves, and anthers and stigma of open flowers.

It localises to the nucleus. The protein resides in the cytoplasm. The protein localises to the endoplasmic reticulum. It catalyses the reaction S-ubiquitinyl-[E2 ubiquitin-conjugating enzyme]-L-cysteine + [acceptor protein]-L-lysine = [E2 ubiquitin-conjugating enzyme]-L-cysteine + N(6)-ubiquitinyl-[acceptor protein]-L-lysine.. The protein operates within protein modification; protein ubiquitination. Possesses E3 ubiquitin-protein ligase activity in vitro. Mediates mainly 'Lys-48'-linked polyubiquitination. Promotes abscisic acid (ABA)-induced stomatal closure, reactive oxygen species (ROS) production and drought tolerance. Involved in the regulation of stomatal aperture. This Arabidopsis thaliana (Mouse-ear cress) protein is E3 ubiquitin-protein ligase RZFP34.